Reading from the N-terminus, the 361-residue chain is Phosphoserine aminotransferase (361 aa).

Residue arginine 43 coordinates L-glutamate. Residues 77-78 (AS), tryptophan 103, threonine 153, aspartate 173, and glutamine 196 contribute to the pyridoxal 5'-phosphate site. The residue at position 197 (lysine 197) is an N6-(pyridoxal phosphate)lysine. 238 to 239 (NT) lines the pyridoxal 5'-phosphate pocket.

It belongs to the class-V pyridoxal-phosphate-dependent aminotransferase family. SerC subfamily. Homodimer. The cofactor is pyridoxal 5'-phosphate.

The protein localises to the cytoplasm. It carries out the reaction O-phospho-L-serine + 2-oxoglutarate = 3-phosphooxypyruvate + L-glutamate. It catalyses the reaction 4-(phosphooxy)-L-threonine + 2-oxoglutarate = (R)-3-hydroxy-2-oxo-4-phosphooxybutanoate + L-glutamate. It participates in amino-acid biosynthesis; L-serine biosynthesis; L-serine from 3-phospho-D-glycerate: step 2/3. Its pathway is cofactor biosynthesis; pyridoxine 5'-phosphate biosynthesis; pyridoxine 5'-phosphate from D-erythrose 4-phosphate: step 3/5. In terms of biological role, catalyzes the reversible conversion of 3-phosphohydroxypyruvate to phosphoserine and of 3-hydroxy-2-oxo-4-phosphonooxybutanoate to phosphohydroxythreonine. The sequence is that of Phosphoserine aminotransferase from Pseudomonas fluorescens (strain SBW25).